The following is a 141-amino-acid chain: Probable mobile endonuclease E (141 aa).

The tract at residues 115–141 is disordered; it reads KMSKSENRSAFNRRNQTQNIGGNQRKG. A compositionally biased stretch (polar residues) spans 122 to 141; that stretch reads RSAFNRRNQTQNIGGNQRKG.

The polypeptide is Probable mobile endonuclease E (mobE) (Escherichia coli (Bacteriophage T4)).